The chain runs to 356 residues: DNA polymerase IV (356 aa).

The region spanning 7–188 (IIHIDMDAFY…IPVTKFYGVG (182 aa)) is the UmuC domain. Residues Asp11 and Asp106 each coordinate Mg(2+). Glu107 is a catalytic residue.

The protein belongs to the DNA polymerase type-Y family. As to quaternary structure, monomer. Mg(2+) serves as cofactor.

Its subcellular location is the cytoplasm. The catalysed reaction is DNA(n) + a 2'-deoxyribonucleoside 5'-triphosphate = DNA(n+1) + diphosphate. Poorly processive, error-prone DNA polymerase involved in untargeted mutagenesis. Copies undamaged DNA at stalled replication forks, which arise in vivo from mismatched or misaligned primer ends. These misaligned primers can be extended by PolIV. Exhibits no 3'-5' exonuclease (proofreading) activity. May be involved in translesional synthesis, in conjunction with the beta clamp from PolIII. In Listeria monocytogenes serotype 4a (strain HCC23), this protein is DNA polymerase IV.